Reading from the N-terminus, the 292-residue chain is Formamidopyrimidine-DNA glycosylase (292 aa).

Residue Pro-2 is the Schiff-base intermediate with DNA of the active site. Residue Glu-3 is the Proton donor of the active site. Catalysis depends on Lys-60, which acts as the Proton donor; for beta-elimination activity. DNA contacts are provided by His-109, Arg-128, and Arg-173. An FPG-type zinc finger spans residues 258–292 (NVYRRTGRECRKCGNLIERQKITGRSTHWCPNCQK). Arg-282 (proton donor; for delta-elimination activity) is an active-site residue.

This sequence belongs to the FPG family. Monomer. Zn(2+) serves as cofactor.

It catalyses the reaction Hydrolysis of DNA containing ring-opened 7-methylguanine residues, releasing 2,6-diamino-4-hydroxy-5-(N-methyl)formamidopyrimidine.. The catalysed reaction is 2'-deoxyribonucleotide-(2'-deoxyribose 5'-phosphate)-2'-deoxyribonucleotide-DNA = a 3'-end 2'-deoxyribonucleotide-(2,3-dehydro-2,3-deoxyribose 5'-phosphate)-DNA + a 5'-end 5'-phospho-2'-deoxyribonucleoside-DNA + H(+). Involved in base excision repair of DNA damaged by oxidation or by mutagenic agents. Acts as a DNA glycosylase that recognizes and removes damaged bases. Has a preference for oxidized purines, such as 7,8-dihydro-8-oxoguanine (8-oxoG). Has AP (apurinic/apyrimidinic) lyase activity and introduces nicks in the DNA strand. Cleaves the DNA backbone by beta-delta elimination to generate a single-strand break at the site of the removed base with both 3'- and 5'-phosphates. This is Formamidopyrimidine-DNA glycosylase from Prochlorococcus marinus (strain MIT 9301).